Reading from the N-terminus, the 211-residue chain is Tudor-interacting repair regulator protein (211 aa).

Residues lysine 10 and lysine 151 each participate in a glycyl lysine isopeptide (Lys-Gly) (interchain with G-Cter in ubiquitin) cross-link. Residues 118–205 (TLEQLHAVEI…TEKQKKALEK (88 aa)) are interaction with PXN.

The protein belongs to the Nudix hydrolase family. TIRR subfamily. As to quaternary structure, homodimer. Interacts with TP53BP1 (via the Tudor-like domain); interaction is abolished following DNA damage and TP53BP1 phosphorylation by ATM. Interacts (via the cytoplasmic part) with SDC4. Interacts with TGFB1I1 and PXN.

Its subcellular location is the nucleus. Key regulator of TP53BP1 required to stabilize TP53BP1 and regulate its recruitment to chromatin. In absence of DNA damage, interacts with the tandem Tudor-like domain of TP53BP1, masking the region that binds histone H4 dimethylated at 'Lys-20' (H4K20me2), thereby preventing TP53BP1 recruitment to chromatin and maintaining TP53BP1 localization to the nucleus. Following DNA damage, ATM-induced phosphorylation of TP53BP1 and subsequent recruitment of RIF1 leads to dissociate NUDT16L1/TIRR from TP53BP1, unmasking the tandem Tudor-like domain and allowing recruitment of TP53BP1 to DNA double strand breaks (DSBs). Binds U8 snoRNA. This is Tudor-interacting repair regulator protein from Homo sapiens (Human).